The following is a 323-amino-acid chain: L-lactate dehydrogenase (323 aa).

NAD(+) is bound by residues Val18, Asp39, Arg44, Tyr69, and 83–84 (GA). Substrate is bound by residues Gln86 and Arg92. NAD(+)-binding positions include Thr105, 122-124 (AAN), and Ser147. 124 to 127 (NPVD) lines the substrate pocket. Substrate is bound at residue 152–155 (DTAR). His179 acts as the Proton acceptor in catalysis. Tyr223 is subject to Phosphotyrosine. Position 232 (Thr232) interacts with substrate.

The protein belongs to the LDH/MDH superfamily. LDH family. In terms of assembly, homotetramer.

The protein localises to the cytoplasm. It carries out the reaction (S)-lactate + NAD(+) = pyruvate + NADH + H(+). It functions in the pathway fermentation; pyruvate fermentation to lactate; (S)-lactate from pyruvate: step 1/1. Functionally, catalyzes the conversion of lactate to pyruvate. This is L-lactate dehydrogenase from Pediococcus acidilactici.